Consider the following 84-residue polypeptide: Toxin Cll9 (84 aa).

The N-terminal stretch at Met1–Ala19 is a signal peptide. Residues Glu20 to Lys83 form the LCN-type CS-alpha/beta domain. Disulfide bonds link Cys31/Cys82, Cys35/Cys58, Cys44/Cys63, and Cys48/Cys65.

As to expression, expressed by the venom gland.

The protein resides in the secreted. In terms of biological role, beta toxins bind voltage-independently at site-4 of sodium channels (Nav) and shift the voltage of activation toward more negative potentials thereby affecting sodium channel activation and promoting spontaneous and repetitive firing. Has some action on peripheral ganglia, but not on other sodium channels such as those from cerebellum granular cells in culture. Induces sleep, suggesting a strong antiepileptic action. This chain is Toxin Cll9, found in Centruroides limpidus (Mexican scorpion).